Reading from the N-terminus, the 475-residue chain is Ribulose bisphosphate carboxylase large chain (475 aa).

Residues 1-2 (MA) constitute a propeptide that is removed on maturation. At P3 the chain carries N-acetylproline. Substrate is bound by residues N123 and T173. The active-site Proton acceptor is K175. K177 lines the substrate pocket. Mg(2+)-binding residues include K201, D203, and E204. Position 201 is an N6-carboxylysine (K201). H294 acts as the Proton acceptor in catalysis. Substrate contacts are provided by R295, H327, and S379.

This sequence belongs to the RuBisCO large chain family. Type I subfamily. As to quaternary structure, heterohexadecamer of 8 large chains and 8 small chains. Requires Mg(2+) as cofactor.

The protein localises to the plastid. It is found in the chloroplast. It catalyses the reaction 2 (2R)-3-phosphoglycerate + 2 H(+) = D-ribulose 1,5-bisphosphate + CO2 + H2O. The enzyme catalyses D-ribulose 1,5-bisphosphate + O2 = 2-phosphoglycolate + (2R)-3-phosphoglycerate + 2 H(+). RuBisCO catalyzes two reactions: the carboxylation of D-ribulose 1,5-bisphosphate, the primary event in carbon dioxide fixation, as well as the oxidative fragmentation of the pentose substrate in the photorespiration process. Both reactions occur simultaneously and in competition at the same active site. In Ostreococcus tauri, this protein is Ribulose bisphosphate carboxylase large chain.